The primary structure comprises 365 residues: UDP-N-acetylglucosamine--N-acetylmuramyl-(pentapeptide) pyrophosphoryl-undecaprenol N-acetylglucosamine transferase (365 aa).

Residues 19-21 (TGG), asparagine 131, arginine 170, serine 201, isoleucine 255, 274-279 (ALTVTE), and glutamine 300 contribute to the UDP-N-acetyl-alpha-D-glucosamine site.

The protein belongs to the glycosyltransferase 28 family. MurG subfamily.

The protein resides in the cell inner membrane. It catalyses the reaction di-trans,octa-cis-undecaprenyl diphospho-N-acetyl-alpha-D-muramoyl-L-alanyl-D-glutamyl-meso-2,6-diaminopimeloyl-D-alanyl-D-alanine + UDP-N-acetyl-alpha-D-glucosamine = di-trans,octa-cis-undecaprenyl diphospho-[N-acetyl-alpha-D-glucosaminyl-(1-&gt;4)]-N-acetyl-alpha-D-muramoyl-L-alanyl-D-glutamyl-meso-2,6-diaminopimeloyl-D-alanyl-D-alanine + UDP + H(+). It participates in cell wall biogenesis; peptidoglycan biosynthesis. Functionally, cell wall formation. Catalyzes the transfer of a GlcNAc subunit on undecaprenyl-pyrophosphoryl-MurNAc-pentapeptide (lipid intermediate I) to form undecaprenyl-pyrophosphoryl-MurNAc-(pentapeptide)GlcNAc (lipid intermediate II). The polypeptide is UDP-N-acetylglucosamine--N-acetylmuramyl-(pentapeptide) pyrophosphoryl-undecaprenol N-acetylglucosamine transferase (Acinetobacter baumannii (strain ATCC 17978 / DSM 105126 / CIP 53.77 / LMG 1025 / NCDC KC755 / 5377)).